The primary structure comprises 432 residues: Pentatricopeptide repeat-containing protein 2, mitochondrial (432 aa).

The transit peptide at 1–33 directs the protein to the mitochondrion; it reads MQFIKRTFPRRAFVDLLLNRFCLREFATTYSVS. 4 PPR repeats span residues 108-142, 143-179, 360-394, and 395-429; these read KTVA…QQKP, SDHT…VTAS, NLQV…GPFP, and TQQT…NVPV.

It localises to the mitochondrion. Its function is as follows. Mitochondrial RNA-binding protein that acts as a general translation factor. Plays a critical role in the synthesis of all mitochondrial DNA-encoded oxidative phosphorylation subunits, which are essential for mitochondrial respiration. Essential for the expression of iron-sulfur cluster (ISC) proteins as well as other heme proteins related to iron-sensing, and thus plays a key role in iron homeostasis. The chain is Pentatricopeptide repeat-containing protein 2, mitochondrial from Schizosaccharomyces pombe (strain 972 / ATCC 24843) (Fission yeast).